A 301-amino-acid chain; its full sequence is Mas-related G-protein coupled receptor member A6 (301 aa).

Over 1–15 (MHRSISIRILITNLM) the chain is Extracellular. A helical membrane pass occupies residues 16 to 36 (IVILGLVGLTGNAIVFWLLLF). Over 37-42 (RLRRNA) the chain is Cytoplasmic. The helical transmembrane segment at 43–63 (FSIYILNLALADFLFLLCHII) threads the bilayer. The Extracellular segment spans residues 64–77 (ASTEHILTFSSPNS). The chain crosses the membrane as a helical span at residues 78 to 98 (IFINCLYTFRVLLYIAGLNML). Residues 99-128 (SAISIERCLSVMCPIWYRCHRPEHTSTVMC) lie on the Cytoplasmic side of the membrane. A helical membrane pass occupies residues 129–149 (AMIWVLSLLLCILYRYFCGFL). Residues 150-163 (DTKYEDDYGCLAMN) lie on the Extracellular side of the membrane. The chain crosses the membrane as a helical span at residues 164 to 184 (FLTTAYLMFLFVVLCVSSLAL). Over 185–203 (LARLFCGAGRMKLTRLYVT) the chain is Cytoplasmic. The helical transmembrane segment at 204–224 (ITLTLLVFLLCGLPCGFYWFL) threads the bilayer. Over 225–240 (LSKIKNVFSVFEFSLY) the chain is Extracellular. A helical transmembrane segment spans residues 241–261 (LTSVVLTAINSCANPIIYFFV). Over 262–301 (GSFRHRLKHQTLKMVLQSALQDTPETPENMVEMSRNKAEL) the chain is Cytoplasmic.

This sequence belongs to the G-protein coupled receptor 1 family. Mas subfamily. Expressed in a subset of sensory neurons that includes nociceptors. Expressed in the subclass of non-peptidergic sensory neurons that are IB4(+) and VR1(-).

It is found in the cell membrane. Orphan receptor. May be a receptor for RFamide-family neuropeptides such as NPFF and NPAF, which are analgesic in vivo. May regulate nociceptor function and/or development, including the sensation or modulation of pain. The polypeptide is Mas-related G-protein coupled receptor member A6 (Mrgpra6) (Mus musculus (Mouse)).